Here is a 146-residue protein sequence, read N- to C-terminus: Mite group 2 allergen Der p 2 (146 aa).

The first 17 residues, 1 to 17, serve as a signal peptide directing secretion; that stretch reads MMYKILCLSLLVAAVAR. 3 cysteine pairs are disulfide-bonded: C25/C136, C38/C44, and C90/C95.

Belongs to the NPC2 family.

The protein localises to the secreted. The polypeptide is Mite group 2 allergen Der p 2 (DERP2) (Dermatophagoides pteronyssinus (European house dust mite)).